A 356-amino-acid chain; its full sequence is Cysteine protease XCP2 (356 aa).

The signal sequence occupies residues 1–26 (MALSSPSRILCFALALSAASLSLSFA). The propeptide at 27 to 137 (SSHDYSIVGY…AEFAYRDVEA (111 aa)) is activation peptide. 3 disulfides stabilise this stretch: Cys-159/Cys-201, Cys-193/Cys-234, and Cys-292/Cys-343. The active site involves Cys-162. Asn-181 is a glycosylation site (N-linked (GlcNAc...) asparagine). Active-site residues include His-298 and Asn-318.

This sequence belongs to the peptidase C1 family. Interacts with PRN2. Mostly expressed in roots, stems and flowers. Confined to tracheary elements, and specifically to xylem.

It localises to the vacuole. Its subcellular location is the cell membrane. In terms of biological role, cysteine protease involved in xylem tracheary element (TE) autolysis during xylogenesis in roots. Participates in micro autolysis within the intact central vacuole before mega autolysis is initiated by tonoplast implosion. Involved in susceptibility to the bacterial plant pathogen Ralstonia solanacearum. This chain is Cysteine protease XCP2, found in Arabidopsis thaliana (Mouse-ear cress).